Here is a 419-residue protein sequence, read N- to C-terminus: Thymidine phosphorylase (419 aa).

Belongs to the thymidine/pyrimidine-nucleoside phosphorylase family. Homodimer.

The catalysed reaction is thymidine + phosphate = 2-deoxy-alpha-D-ribose 1-phosphate + thymine. Functionally, the enzymes which catalyze the reversible phosphorolysis of pyrimidine nucleosides are involved in the degradation of these compounds and in their utilization as carbon and energy sources, or in the rescue of pyrimidine bases for nucleotide synthesis. The protein is Thymidine phosphorylase (deoA) of Mycoplasmoides pirum (Mycoplasma pirum).